Consider the following 1565-residue polypeptide: Synemin (1565 aa).

Residues Met1–Pro10 are head. Residues Glu11–Arg49 form a coil 1A region. The segment at Glu11–Asn320 is interaction with DMD and UTRN. Residues Glu11–Glu322 enclose the IF rod domain. Residues Glu50–Ala58 form a linker 1 region. Residues Arg59–Thr163 form a coil 1B region. A linker 12 region spans residues Met164–Ser186. Positions Tyr187–Val300 are coil 2. The interval Lys301–Phe1565 is tail. The tract at residues Ser401 to Ser421 is disordered. Polar residues predominate over residues Gly402–Ser421. Ser429 carries the phosphoserine modification. Residues Tyr472–Arg609 are disordered. Positions Lys498–Val577 are enriched in basic and acidic residues. A phosphothreonine mark is found at Thr598 and Thr651. Phosphoserine occurs at positions 653 and 777. The span at Leu1019–Ser1040 shows a compositional bias: basic and acidic residues. The disordered stretch occupies residues Leu1019–Ala1060. 6 positions are modified to phosphoserine: Ser1044, Ser1049, Ser1077, Ser1087, Ser1181, and Ser1184. The segment at Ser1080–Val1105 is disordered. The segment covering Ser1087–Val1105 has biased composition (polar residues). The tract at residues Val1152–Gln1463 is interaction with TLN1 and VCL. Disordered stretches follow at residues Glu1198–Ser1221 and Gln1332–Glu1415. Residues Gly1244–His1563 form an interaction with DMD and UTRN region. Over residues Ala1354–Ser1379 the composition is skewed to polar residues. Phosphoserine is present on Ser1435. At Arg1487 the chain carries Omega-N-methylarginine. Residues Phe1505–Met1525 are disordered. Positions Asp1513–Met1525 are enriched in basic and acidic residues.

It belongs to the intermediate filament family. As to quaternary structure, interacts with GFAP and VIM. Isoform 1 interacts with TLN1 and VCL. Isoform 2 interacts with DES and DTNA. Isoform 1 and isoform 2 interact with DMD and UTRN. As to expression, isoform 2 is strongly detected in adult heart, fetal skeletal muscles and fetal heart. Isoform 1 is weakly detected in fetal heart and also in fetal skeletal muscle. Isoform 1 and isoform 2 are detected in adult bladder (at protein level). The mRNA is predominantly expressed in heart and muscle with some expression in brain which may be due to tissue-specific isoforms.

The protein localises to the cytoplasm. The protein resides in the cytoskeleton. It localises to the cell junction. Its subcellular location is the adherens junction. Its function is as follows. Type-VI intermediate filament (IF) which plays an important cytoskeletal role within the muscle cell cytoskeleton. It forms heteromeric IFs with desmin and/or vimentin, and via its interaction with cytoskeletal proteins alpha-dystrobrevin, dystrophin, talin-1, utrophin and vinculin, is able to link these heteromeric IFs to adherens-type junctions, such as to the costameres, neuromuscular junctions, and myotendinous junctions within striated muscle cells. This is Synemin from Homo sapiens (Human).